Consider the following 116-residue polypeptide: Ribonuclease P protein component (116 aa).

This sequence belongs to the RnpA family. In terms of assembly, consists of a catalytic RNA component (M1 or rnpB) and a protein subunit.

It carries out the reaction Endonucleolytic cleavage of RNA, removing 5'-extranucleotides from tRNA precursor.. RNaseP catalyzes the removal of the 5'-leader sequence from pre-tRNA to produce the mature 5'-terminus. It can also cleave other RNA substrates such as 4.5S RNA. The protein component plays an auxiliary but essential role in vivo by binding to the 5'-leader sequence and broadening the substrate specificity of the ribozyme. This chain is Ribonuclease P protein component, found in Thermoanaerobacter pseudethanolicus (strain ATCC 33223 / 39E) (Clostridium thermohydrosulfuricum).